Consider the following 531-residue polypeptide: rRNA methyltransferase 1, mitochondrial (531 aa).

Residues 1-40 constitute a mitochondrion transit peptide; that stretch reads MISIFKILSSPKPATTTTNIINPINIINGIRYFSSNQEDY. 2 disordered regions span residues 70–141 and 230–277; these read ESHY…RTEY and IEDE…KKTT. Residues 74-136 show a composition bias toward low complexity; the sequence is NNNNNSNNNS…NNFRNNNNNN (63 aa). Positions 247–267 are enriched in acidic residues; that stretch reads EQNEYEEEQEEEKVQEEEEDN.

This sequence belongs to the class IV-like SAM-binding methyltransferase superfamily. RNA methyltransferase TrmH family.

The protein resides in the mitochondrion. The catalysed reaction is a uridine in rRNA + S-adenosyl-L-methionine = a 2'-O-methyluridine in rRNA + S-adenosyl-L-homocysteine + H(+). S-adenosyl-L-methionine-dependent 2'-O-ribose methyltransferase that catalyzes the formation of a 2'-O-methylguanosine in the mitochondrial large subunit ribosomal RNA (mtLSU rRNA), a universally conserved modification in the peptidyl transferase domain of the mtLSU rRNA. This Dictyostelium discoideum (Social amoeba) protein is rRNA methyltransferase 1, mitochondrial (mrm1).